A 401-amino-acid polypeptide reads, in one-letter code: Alpha-(1,4)-fucosyltransferase (401 aa).

Over 1–4 the chain is Cytoplasmic; that stretch reads MPMR. The helical; Signal-anchor for type II membrane protein transmembrane segment at 5–27 threads the bilayer; the sequence is YLNAMAALLMMFFTLLILSFTGI. Residues 28 to 401 are Lumenal-facing; that stretch reads LEFPSASTSM…SRRGGKNAGV (374 aa). Asparagine 85 carries N-linked (GlcNAc...) asparagine glycosylation.

It belongs to the glycosyltransferase 10 family. As to expression, present in root, stem, flower buds and green siliques.

The protein resides in the golgi apparatus. The protein localises to the golgi stack membrane. Its pathway is protein modification; protein glycosylation. In terms of biological role, may be involved in cell wall synthesis. Catalyzes alpha-1,4 glycosidic linkages and generates Lewis-a epitopes. This Arabidopsis thaliana (Mouse-ear cress) protein is Alpha-(1,4)-fucosyltransferase (FUT13).